Here is a 200-residue protein sequence, read N- to C-terminus: Phospholipase A2 inhibitor LNF2 (200 aa).

The signal sequence occupies residues 1–19 (MKSLHTICLLFIFVARGNS). 8 disulfides stabilise this stretch: Cys22–Cys46, Cys25–Cys32, Cys39–Cys67, Cys73–Cys94, Cys95–Cys100, Cys118–Cys143, Cys136–Cys165, and Cys169–Cys191. Asn176 carries an N-linked (GlcNAc...) asparagine glycan.

It belongs to the CNF-like-inhibitor family. In terms of assembly, occurs as a mixture of oligomers. Tetrameric arrangement appears to be the predominant quaternary structure. Expressed by the liver.

The protein resides in the secreted. In terms of biological role, inhibits the enzymatic activity of phospholipase A2 (PA2). The protein is Phospholipase A2 inhibitor LNF2 of Lachesis muta muta (Bushmaster).